We begin with the raw amino-acid sequence, 93 residues long: Pyrimidine/purine nucleoside phosphorylase (93 aa).

This sequence belongs to the nucleoside phosphorylase PpnP family.

The enzyme catalyses a purine D-ribonucleoside + phosphate = a purine nucleobase + alpha-D-ribose 1-phosphate. It carries out the reaction adenosine + phosphate = alpha-D-ribose 1-phosphate + adenine. It catalyses the reaction cytidine + phosphate = cytosine + alpha-D-ribose 1-phosphate. The catalysed reaction is guanosine + phosphate = alpha-D-ribose 1-phosphate + guanine. The enzyme catalyses inosine + phosphate = alpha-D-ribose 1-phosphate + hypoxanthine. It carries out the reaction thymidine + phosphate = 2-deoxy-alpha-D-ribose 1-phosphate + thymine. It catalyses the reaction uridine + phosphate = alpha-D-ribose 1-phosphate + uracil. The catalysed reaction is xanthosine + phosphate = alpha-D-ribose 1-phosphate + xanthine. Functionally, catalyzes the phosphorolysis of diverse nucleosides, yielding D-ribose 1-phosphate and the respective free bases. Can use uridine, adenosine, guanosine, cytidine, thymidine, inosine and xanthosine as substrates. Also catalyzes the reverse reactions. This is Pyrimidine/purine nucleoside phosphorylase from Hahella chejuensis (strain KCTC 2396).